The following is an 83-amino-acid chain: Small ribosomal subunit protein bS16 (83 aa).

The protein belongs to the bacterial ribosomal protein bS16 family.

The chain is Small ribosomal subunit protein bS16 from Borrelia duttonii (strain Ly).